A 755-amino-acid polypeptide reads, in one-letter code: Thermostable beta-glucosidase B (755 aa).

Aspartate 231 is an active-site residue.

This sequence belongs to the glycosyl hydrolase 3 family.

It carries out the reaction Hydrolysis of terminal, non-reducing beta-D-glucosyl residues with release of beta-D-glucose.. Its pathway is glycan metabolism; cellulose degradation. The chain is Thermostable beta-glucosidase B (bglB) from Acetivibrio thermocellus (strain ATCC 27405 / DSM 1237 / JCM 9322 / NBRC 103400 / NCIMB 10682 / NRRL B-4536 / VPI 7372) (Clostridium thermocellum).